The primary structure comprises 384 residues: Glycerol 3-phosphate oxidase (384 aa).

An N-terminal signal peptide occupies residues 1-15 (METRDVLIVGGGVIG). Residue isoleucine 14 participates in FAD binding. Cysteine 16 carries the N-palmitoyl cysteine lipid modification. Cysteine 16 is lipidated: S-diacylglycerol cysteine. FAD contacts are provided by residues glutamate 33, 42–43 (TS), and 47–49 (SGV). Residues serine 47 and histidine 51 each contribute to the sn-glycerol 3-phosphate site. The active-site Proton acceptor is the histidine 51. Residue valine 177 coordinates FAD. Sn-glycerol 3-phosphate-binding residues include lysine 258 and arginine 320. 346–347 (MK) contacts FAD. Serine 348 is a sn-glycerol 3-phosphate binding site. Threonine 352 contacts FAD.

Monomer. FAD is required as a cofactor.

The protein resides in the cytoplasm. The protein localises to the cell membrane. The catalysed reaction is sn-glycerol 3-phosphate + O2 = dihydroxyacetone phosphate + H2O2. It participates in polyol metabolism; glycerol degradation via glycerol kinase pathway; glycerone phosphate from sn-glycerol 3-phosphate (aerobic route): step 1/1. Catalyzes the oxidation of glycerol 3-phosphate to dihydroxyacetone phosphate (DHAP), with a reduction of O2 to H2O2. The formation of hydrogen peroxide by this enzyme is crucial for cytotoxic effects of M.pneumoniae on host cells. Is involved in the metabolism of glycerol and is essential for glycerol utilization; glycerol is one of the few carbon sources that can be utilized by M.pneumoniae for growth. To a lesser extent, is also able to use glyceraldehyde 3-phosphate (GAP), an intermediate in the glycolysis pathway, as a substrate (but the structure of the product has not been elucidated). Therefore, in the absence of glycerol, GAP may serve as a substrate in the GlpO reaction to supply H2O2 during mycoplasma infection. Does not show any dehydrogenase activity with NAD(+). This Mycoplasma pneumoniae (strain ATCC 29342 / M129 / Subtype 1) (Mycoplasmoides pneumoniae) protein is Glycerol 3-phosphate oxidase.